The primary structure comprises 382 residues: Putative phospholipase A1 (382 aa).

The signal sequence occupies residues 1-27 (MPTMGAEMNTRNMRYILLTGLLPMASA). The Periplasmic segment spans residues 28-65 (FGETALQCAALTDNVTRLACYDRIFAAQLPSSAGQEGQ). A beta stranded transmembrane segment spans residues 66-78 (ESKAVLNLTETVR). Over 79–168 (SSLDKGEAVI…VQEKFGQQKR (90 aa)) the chain is Extracellular. Residues 169-183 (AETKLQVSFKSKIAE) traverse the membrane as a beta stranded segment. Residues 184-189 (DLFKTR) lie on the Periplasmic side of the membrane. A beta stranded transmembrane segment spans residues 190 to 202 (ADLWFGYTQRSDW). Residues 203–213 (QIYNQGRKSAP) lie on the Extracellular side of the membrane. Ser-211 is a binding site for Ca(2+). Residues 214-233 (FRNTDYKPEIFLTQPVKADL) traverse the membrane as a beta stranded segment. The Periplasmic portion of the chain corresponds to 234-236 (PFG). The chain crosses the membrane as a beta stranded span at residues 237-250 (GRLRMLGAGFVHQS). Residue His-248 is the Proton acceptor of the active site. Ser-250 functions as the Nucleophile in the catalytic mechanism. Over 251-259 (NGQSRPESR) the chain is Extracellular. Ser-258 contributes to the Ca(2+) binding site. Residues 260–272 (SWNRIYAMAGMEW) form a beta stranded membrane-spanning segment. At 273–274 (GK) the chain is on the periplasmic side. The beta stranded transmembrane segment at 275-284 (LTVIPRVWVR) threads the bilayer. Topologically, residues 285 to 306 (AFDQSGDKNDNPDIADYMGYGD) are extracellular. Position 294 (Asp-294) interacts with Ca(2+). A beta stranded membrane pass occupies residues 307 to 313 (VKLQYRL). The Periplasmic portion of the chain corresponds to 314 to 315 (ND). Residues 316–325 (RQNVYSVLRY) form a beta stranded membrane-spanning segment. Residues 326–332 (NPKTGYG) lie on the Extracellular side of the membrane. The chain crosses the membrane as a beta stranded span at residues 333-341 (AIEAAYTFP). Residues 342 to 346 (IKGKL) lie on the Periplasmic side of the membrane. Residues 347 to 356 (KGVVRGFHGY) form a beta stranded membrane-spanning segment. Topologically, residues 357 to 365 (GESLIDYNH) are extracellular. A beta stranded transmembrane segment spans residues 366–377 (KQNGIGIGLMFN). At 378-382 (DLDGI) the chain is on the periplasmic side.

The protein belongs to the phospholipase A1 family. Homodimer; dimerization is reversible, and the dimeric form is the active one. It depends on Ca(2+) as a cofactor.

It localises to the cell outer membrane. The enzyme catalyses a 1,2-diacyl-sn-glycero-3-phosphocholine + H2O = a 2-acyl-sn-glycero-3-phosphocholine + a fatty acid + H(+). It carries out the reaction a 1,2-diacyl-sn-glycero-3-phosphocholine + H2O = a 1-acyl-sn-glycero-3-phosphocholine + a fatty acid + H(+). In terms of biological role, hydrolysis of phosphatidylcholine with phospholipase A2 (EC 3.1.1.4) and phospholipase A1 (EC 3.1.1.32) activities. The sequence is that of Putative phospholipase A1 from Neisseria meningitidis serogroup B (strain ATCC BAA-335 / MC58).